A 137-amino-acid chain; its full sequence is Kunitz-type trypsin inhibitor alpha chain (137 aa).

Cys-40 and Cys-86 are disulfide-bonded.

The protein belongs to the protease inhibitor I3 (leguminous Kunitz-type inhibitor) family. In terms of assembly, heterodimer of an alpha and a beta chain linked by a disulfide bond.

Its function is as follows. Inhibition of trypsin. The protein is Kunitz-type trypsin inhibitor alpha chain of Neltuma juliflora (Mesquite).